A 601-amino-acid chain; its full sequence is HMG domain-containing protein 4 (601 aa).

Lysine 8 is covalently cross-linked (Glycyl lysine isopeptide (Lys-Gly) (interchain with G-Cter in SUMO2)). Disordered stretches follow at residues valine 51 to asparagine 410 and threonine 473 to alanine 514. A compositionally biased stretch (low complexity) spans aspartate 82–serine 93. Position 102 is a phosphoserine (serine 102). A Glycyl lysine isopeptide (Lys-Gly) (interchain with G-Cter in SUMO2) cross-link involves residue lysine 191. Serine 197 carries the phosphoserine modification. 2 stretches are compositionally biased toward polar residues: residues glutamine 212–lysine 221 and aspartate 270–leucine 282. Residues isoleucine 316–arginine 344 are compositionally biased toward basic residues. Residues glutamate 394–glutamate 404 show a composition bias toward basic and acidic residues. Positions lysine 407–valine 475 form a DNA-binding region, HMG box. Serine 497, serine 502, and serine 512 each carry phosphoserine.

It localises to the nucleus. In terms of biological role, negatively regulates Wnt/beta-catenin signaling during development. This is HMG domain-containing protein 4 (HMGXB4) from Homo sapiens (Human).